We begin with the raw amino-acid sequence, 652 residues long: UvrABC system protein C (652 aa).

Residues 20–99 form the GIY-YIG domain; it reads PEPGCYLMRD…IKNHQPHFNV (80 aa). The UVR domain maps to 209–244; it reads DELQRLLDEQMNRYAERLDFESAARVRDQLQGLDQL.

The protein belongs to the UvrC family. In terms of assembly, interacts with UvrB in an incision complex.

The protein resides in the cytoplasm. The UvrABC repair system catalyzes the recognition and processing of DNA lesions. UvrC both incises the 5' and 3' sides of the lesion. The N-terminal half is responsible for the 3' incision and the C-terminal half is responsible for the 5' incision. The chain is UvrABC system protein C from Parasynechococcus marenigrum (strain WH8102).